The sequence spans 357 residues: Prostaglandin D2 receptor (357 aa).

Residues 1–20 (MNESYRCQTSTWVERGSSAT) lie on the Extracellular side of the membrane. N-linked (GlcNAc...) asparagine glycosylation occurs at asparagine 2. The chain crosses the membrane as a helical span at residues 21-41 (MGAVLFGAGLLGNLLALVLLA). The Cytoplasmic segment spans residues 42–58 (RSGLGSCRPGPLHPPPS). A helical transmembrane segment spans residues 59–79 (VFYVLVCGLTVTDLLGKCLIS). The Extracellular portion of the chain corresponds to 80-106 (PMVLAAYAQNQSLKELLPASGNQLCET). Asparagine 89 is a glycosylation site (N-linked (GlcNAc...) asparagine). Cysteine 104 and cysteine 182 form a disulfide bridge. Residues 107–127 (FAFLMSFFGLASTLQLLAMAV) form a helical membrane-spanning segment. Topologically, residues 128–149 (ECWLSLGHPFFYQRHVTLRRGV) are cytoplasmic. The chain crosses the membrane as a helical span at residues 150–170 (LVAPVVAAFCLAFCALPFAGF). Over 171–194 (GKFVQYCPGTWCFIQMIHKERSFS) the chain is Extracellular. A helical membrane pass occupies residues 195–215 (VIGFSVLYSSLMALLVLATVV). The Cytoplasmic portion of the chain corresponds to 216–261 (CNLGAMYNLYDMHRRQRHYPHRCSRDRAQSGSDYRHGSLHPLEELD). Residues 262 to 282 (HFVLLALMTVLFTMCSLPLIY) traverse the membrane as a helical segment. Over 283–306 (RAYYGAFKLENKAEGDSEDLQALR) the chain is Extracellular. A helical transmembrane segment spans residues 307 to 327 (FLSVISIVDPWIFIIFRTSVF). At 328–357 (RMLFHKVFTRPLIYRNWSSHSQQSNVESTL) the chain is on the cytoplasmic side.

Belongs to the G-protein coupled receptor 1 family. As to expression, most abundantly expressed in the ileum, followed by lung, stomach and uterus.

The protein resides in the cell membrane. Its function is as follows. Receptor for prostaglandin D2 (PGD2). The activity of this receptor is mainly mediated by G(s) proteins that stimulate adenylate cyclase, resulting in an elevation of intracellular cAMP. A mobilization of calcium is also observed, but without formation of inositol 1,4,5-trisphosphate. Involved in PLA2G3-dependent maturation of mast cells. PLA2G3 is secreted by immature mast cells and acts on nearby fibroblasts upstream to PTDGS to synthesize PGD2, which in turn promotes mast cell maturation and degranulation via PTGDR. The protein is Prostaglandin D2 receptor (Ptgdr) of Mus musculus (Mouse).